Reading from the N-terminus, the 466-residue chain is Cysteine--tRNA ligase (466 aa).

Cys-33 contributes to the Zn(2+) binding site. Residues 35 to 45 (PTVYDYAHIGN) carry the 'HIGH' region motif. Zn(2+)-binding residues include Cys-221, His-246, and Glu-250. A 'KMSKS' region motif is present at residues 279–283 (KMSKS). Lys-282 is an ATP binding site.

The protein belongs to the class-I aminoacyl-tRNA synthetase family. Monomer. Requires Zn(2+) as cofactor.

It localises to the cytoplasm. It catalyses the reaction tRNA(Cys) + L-cysteine + ATP = L-cysteinyl-tRNA(Cys) + AMP + diphosphate. The sequence is that of Cysteine--tRNA ligase from Rhizobium meliloti (strain 1021) (Ensifer meliloti).